Reading from the N-terminus, the 609-residue chain is 1-deoxy-D-xylulose-5-phosphate synthase (609 aa).

Thiamine diphosphate contacts are provided by residues H77 and 118 to 120; that span reads GHS. D149 contributes to the Mg(2+) binding site. Residues 150 to 151, N178, Y259, and E342 contribute to the thiamine diphosphate site; that span reads GA. A Mg(2+)-binding site is contributed by N178.

The protein belongs to the transketolase family. DXPS subfamily. In terms of assembly, homodimer. It depends on Mg(2+) as a cofactor. Thiamine diphosphate is required as a cofactor.

The catalysed reaction is D-glyceraldehyde 3-phosphate + pyruvate + H(+) = 1-deoxy-D-xylulose 5-phosphate + CO2. The protein operates within metabolic intermediate biosynthesis; 1-deoxy-D-xylulose 5-phosphate biosynthesis; 1-deoxy-D-xylulose 5-phosphate from D-glyceraldehyde 3-phosphate and pyruvate: step 1/1. Catalyzes the acyloin condensation reaction between C atoms 2 and 3 of pyruvate and glyceraldehyde 3-phosphate to yield 1-deoxy-D-xylulose-5-phosphate (DXP). The chain is 1-deoxy-D-xylulose-5-phosphate synthase from Listeria monocytogenes serotype 4b (strain CLIP80459).